A 314-amino-acid chain; its full sequence is Pantothenate kinase (314 aa).

93-100 lines the ATP pocket; it reads GSVAVGKS.

It belongs to the prokaryotic pantothenate kinase family.

It localises to the cytoplasm. The catalysed reaction is (R)-pantothenate + ATP = (R)-4'-phosphopantothenate + ADP + H(+). The protein operates within cofactor biosynthesis; coenzyme A biosynthesis; CoA from (R)-pantothenate: step 1/5. The protein is Pantothenate kinase of Shewanella denitrificans (strain OS217 / ATCC BAA-1090 / DSM 15013).